A 174-amino-acid polypeptide reads, in one-letter code: Co-chaperone protein HscB homolog (174 aa).

Residues 2 to 74 (NYFDLFNVVP…LRRAEHMLSL (73 aa)) form the J domain.

Belongs to the HscB family. Interacts with HscA and stimulates its ATPase activity.

Functionally, co-chaperone involved in the maturation of iron-sulfur cluster-containing proteins. Seems to help targeting proteins to be folded toward HscA. The chain is Co-chaperone protein HscB homolog from Shewanella frigidimarina (strain NCIMB 400).